Here is a 664-residue protein sequence, read N- to C-terminus: DNA ligase (664 aa).

NAD(+)-binding positions include 31–35 (DYEFD), 80–81 (SL), and glutamate 110. The N6-AMP-lysine intermediate role is filled by lysine 112. The NAD(+) site is built by arginine 133 and glutamate 169. Residues 237-257 (LEKARKWGFKVPAESELKDSI) form the BRCT 1 domain. NAD(+)-binding residues include lysine 284 and lysine 308. Zn(2+)-binding residues include cysteine 402, cysteine 405, cysteine 420, and cysteine 426. Residues 586–664 (NQTNILEGNT…SEEDFLKMLE (79 aa)) enclose the BRCT 2 domain.

The protein belongs to the NAD-dependent DNA ligase family. LigA subfamily. Requires Mg(2+) as cofactor. Mn(2+) serves as cofactor.

It carries out the reaction NAD(+) + (deoxyribonucleotide)n-3'-hydroxyl + 5'-phospho-(deoxyribonucleotide)m = (deoxyribonucleotide)n+m + AMP + beta-nicotinamide D-nucleotide.. Its function is as follows. DNA ligase that catalyzes the formation of phosphodiester linkages between 5'-phosphoryl and 3'-hydroxyl groups in double-stranded DNA using NAD as a coenzyme and as the energy source for the reaction. It is essential for DNA replication and repair of damaged DNA. In Christiangramia forsetii (strain DSM 17595 / CGMCC 1.15422 / KT0803) (Gramella forsetii), this protein is DNA ligase.